Here is a 242-residue protein sequence, read N- to C-terminus: DNA repair protein RecO (242 aa).

Belongs to the RecO family.

Its function is as follows. Involved in DNA repair and RecF pathway recombination. This Xanthobacter autotrophicus (strain ATCC BAA-1158 / Py2) protein is DNA repair protein RecO.